The primary structure comprises 320 residues: Acetaldehyde dehydrogenase 2 (320 aa).

The active-site Acyl-thioester intermediate is Cys-129. NAD(+) contacts are provided by residues 160 to 168 (SAGPGTRAN) and Asn-287.

It belongs to the acetaldehyde dehydrogenase family.

It catalyses the reaction acetaldehyde + NAD(+) + CoA = acetyl-CoA + NADH + H(+). This chain is Acetaldehyde dehydrogenase 2, found in Burkholderia cenocepacia (strain ATCC BAA-245 / DSM 16553 / LMG 16656 / NCTC 13227 / J2315 / CF5610) (Burkholderia cepacia (strain J2315)).